The primary structure comprises 83 residues: Neurotoxin LmNaTx3 (83 aa).

An N-terminal signal peptide occupies residues Met1 to Ser21. The LCN-type CS-alpha/beta domain maps to Lys22 to Cys83. Intrachain disulfides connect Cys32–Cys83, Cys36–Cys59, Cys45–Cys64, and Cys49–Cys66.

The protein belongs to the long (4 C-C) scorpion toxin superfamily. Sodium channel inhibitor family. Alpha subfamily. Expressed by the venom gland.

The protein resides in the secreted. Functionally, binds voltage-independently at site-3 of voltage-gated sodium channels (Nav) and inhibits the inactivation of the activated channels, thereby blocking neuronal transmission. The protein is Neurotoxin LmNaTx3 of Lychas mucronatus (Chinese swimming scorpion).